We begin with the raw amino-acid sequence, 296 residues long: Chronophin (296 aa).

Asp25 acts as the Nucleophile in catalysis. Residues Asp25 and Asn27 each contribute to the Mg(2+) site. Asn27 serves as the catalytic Proton donor. Residues 58–60 (SNN), His182, and Lys213 each bind substrate. Asp238 lines the Mg(2+) pocket.

Belongs to the HAD-like hydrolase superfamily. In terms of assembly, homodimer. Requires Mg(2+) as cofactor. Detected in brain (at protein level).

It localises to the cytoplasm. The protein localises to the cytosol. The protein resides in the cytoskeleton. It is found in the cell projection. Its subcellular location is the ruffle membrane. It localises to the lamellipodium membrane. The protein localises to the cell membrane. It catalyses the reaction pyridoxal 5'-phosphate + H2O = pyridoxal + phosphate. The catalysed reaction is pyridoxine 5'-phosphate + H2O = pyridoxine + phosphate. The enzyme catalyses pyridoxamine + phosphate = pyridoxamine 5'-phosphate + H2O. It carries out the reaction O-phospho-L-seryl-[protein] + H2O = L-seryl-[protein] + phosphate. Functions as a pyridoxal phosphate (PLP) phosphatase, which also catalyzes the dephosphorylation of pyridoxine 5'-phosphate (PNP) and pyridoxamine 5'-phosphate (PMP), with order of substrate preference PLP &gt; PNP &gt; PMP and therefore plays a role in vitamin B6 metabolism. Also functions as a protein serine phosphatase that specifically dephosphorylates 'Ser-3' in proteins of the actin-depolymerizing factor (ADF)/cofilin family like CFL1 and DSTN. Thereby, regulates cofilin-dependent actin cytoskeleton reorganization, being required for normal progress through mitosis and normal cytokinesis. Does not dephosphorylate phosphothreonines in LIMK1. Does not dephosphorylate peptides containing phosphotyrosine. The sequence is that of Chronophin from Bos taurus (Bovine).